Reading from the N-terminus, the 310-residue chain is Ribonuclease Z (310 aa).

The Zn(2+) site is built by His-64, His-66, Asp-68, His-69, His-142, Asp-213, and His-271. The active-site Proton acceptor is Asp-68.

The protein belongs to the RNase Z family. In terms of assembly, homodimer. Zn(2+) is required as a cofactor.

It catalyses the reaction Endonucleolytic cleavage of RNA, removing extra 3' nucleotides from tRNA precursor, generating 3' termini of tRNAs. A 3'-hydroxy group is left at the tRNA terminus and a 5'-phosphoryl group is left at the trailer molecule.. In terms of biological role, zinc phosphodiesterase, which displays some tRNA 3'-processing endonuclease activity. Probably involved in tRNA maturation, by removing a 3'-trailer from precursor tRNA. This is Ribonuclease Z from Treponema pallidum (strain Nichols).